A 177-amino-acid chain; its full sequence is uncharacterized protein (177 aa).

Belongs to the flavoredoxin family. It depends on FMN as a cofactor.

This is an uncharacterized protein from Archaeoglobus fulgidus (strain ATCC 49558 / DSM 4304 / JCM 9628 / NBRC 100126 / VC-16).